The chain runs to 297 residues: Protein muscleblind (297 aa).

2 consecutive C3H1-type zinc fingers follow at residues 18 to 46 and 52 to 80; these read WLQL…HPPA and NGKV…HPPQ.

The protein belongs to the muscleblind family. As to expression, expressed in embryonic muscle cells.

The protein localises to the nucleus. In terms of biological role, required for terminal differentiation of photoreceptor cells. Vital for embryonic development. This chain is Protein muscleblind (mbl), found in Drosophila melanogaster (Fruit fly).